Reading from the N-terminus, the 186-residue chain is Protein TRL14 (186 aa).

Residues asparagine 24, asparagine 64, and asparagine 72 are each glycosylated (N-linked (GlcNAc...) asparagine; by host). The chain crosses the membrane as a helical span at residues 143–163 (HAVWAGVVVSVALIALYMGSH).

Belongs to the RL11 family.

It localises to the virion membrane. The chain is Protein TRL14 from Human cytomegalovirus (strain AD169) (HHV-5).